We begin with the raw amino-acid sequence, 244 residues long: 1-(5-phosphoribosyl)-5-[(5-phosphoribosylamino)methylideneamino] imidazole-4-carboxamide isomerase (244 aa).

Aspartate 8 acts as the Proton acceptor in catalysis. Aspartate 130 acts as the Proton donor in catalysis.

It belongs to the HisA/HisF family.

It localises to the cytoplasm. It carries out the reaction 1-(5-phospho-beta-D-ribosyl)-5-[(5-phospho-beta-D-ribosylamino)methylideneamino]imidazole-4-carboxamide = 5-[(5-phospho-1-deoxy-D-ribulos-1-ylimino)methylamino]-1-(5-phospho-beta-D-ribosyl)imidazole-4-carboxamide. Its pathway is amino-acid biosynthesis; L-histidine biosynthesis; L-histidine from 5-phospho-alpha-D-ribose 1-diphosphate: step 4/9. This Hahella chejuensis (strain KCTC 2396) protein is 1-(5-phosphoribosyl)-5-[(5-phosphoribosylamino)methylideneamino] imidazole-4-carboxamide isomerase.